Consider the following 836-residue polypeptide: Probable RING finger protein 207 homolog (836 aa).

Residues 8–42 form an RING-type zinc finger; it reads CTICKNDFEEPILFSCQHTTCRKCSNGSPSCKTCS. A B box-type 1; atypical zinc finger spans residues 68 to 115; sequence EEMEQCANCEQITLPMFYCETCQQSLCLACRNVTHQARMFSSHKIISS. Zn(2+)-binding residues include Cys-73, Cys-76, Cys-97, and His-102. The B box-type 2; degenerate zinc finger occupies 122–164; that stretch reads YSSSLCKDHNEPYILYCSDVRKLVCIQCFNGRPLEERHSFISI. Residues 527–557 adopt a coiled-coil conformation; the sequence is QNRIMAIEKEEENRRLNQEAKKKEELAGQSA. A compositionally biased stretch (basic and acidic residues) spans 540 to 552; sequence RRLNQEAKKKEEL. The segment at 540–571 is disordered; sequence RRLNQEAKKKEELAGQSAAMKSLKHGKTKRKE. The segment covering 561–571 has biased composition (basic residues); sequence SLKHGKTKRKE.

In Caenorhabditis briggsae, this protein is Probable RING finger protein 207 homolog.